We begin with the raw amino-acid sequence, 56 residues long: Large ribosomal subunit protein bL32 (56 aa).

Positions 1–26 (MAVQQNKPTRSKRGMRRSHDSLTTAA) are disordered.

The protein belongs to the bacterial ribosomal protein bL32 family.

The chain is Large ribosomal subunit protein bL32 from Erwinia tasmaniensis (strain DSM 17950 / CFBP 7177 / CIP 109463 / NCPPB 4357 / Et1/99).